The following is a 126-amino-acid chain: Probable glycine cleavage system H protein (126 aa).

Residues 24–106 form the Lipoyl-binding domain; it reads VVRVGITDFA…FGDGWLLEVE (83 aa). Lys-65 carries the post-translational modification N6-lipoyllysine.

The protein belongs to the GcvH family. In terms of assembly, the glycine cleavage system is composed of four proteins: P, T, L and H. Requires (R)-lipoate as cofactor.

In terms of biological role, the glycine cleavage system catalyzes the degradation of glycine. The H protein shuttles the methylamine group of glycine from the P protein to the T protein. The polypeptide is Probable glycine cleavage system H protein (Natronomonas pharaonis (strain ATCC 35678 / DSM 2160 / CIP 103997 / JCM 8858 / NBRC 14720 / NCIMB 2260 / Gabara) (Halobacterium pharaonis)).